The sequence spans 69 residues: Defensin-like protein 166 (69 aa).

The N-terminal stretch at 1–15 (MIIVIIFLVIYFNNQ) is a signal peptide. Cystine bridges form between Cys19/Cys68, Cys24/Cys44, Cys29/Cys62, and Cys33/Cys64.

The protein belongs to the DEFL family.

The protein localises to the secreted. In Arabidopsis thaliana (Mouse-ear cress), this protein is Defensin-like protein 166.